The sequence spans 776 residues: DNA ligase (776 aa).

Residues 31-35, 80-81, and Glu112 each bind NAD(+); these read DAEYD and SL. Lys114 (N6-AMP-lysine intermediate) is an active-site residue. Residues Arg135, Glu172, Lys288, and Lys312 each contribute to the NAD(+) site. Residues Cys406, Cys409, Cys436, and Cys442 each coordinate Zn(2+). The BRCT domain occupies 693–776; sequence AEGLPLAGQT…TFLAEQGIAV (84 aa).

This sequence belongs to the NAD-dependent DNA ligase family. LigA subfamily. It depends on Mg(2+) as a cofactor. The cofactor is Mn(2+).

The enzyme catalyses NAD(+) + (deoxyribonucleotide)n-3'-hydroxyl + 5'-phospho-(deoxyribonucleotide)m = (deoxyribonucleotide)n+m + AMP + beta-nicotinamide D-nucleotide.. Functionally, DNA ligase that catalyzes the formation of phosphodiester linkages between 5'-phosphoryl and 3'-hydroxyl groups in double-stranded DNA using NAD as a coenzyme and as the energy source for the reaction. It is essential for DNA replication and repair of damaged DNA. The chain is DNA ligase from Pseudomonas putida (strain ATCC 700007 / DSM 6899 / JCM 31910 / BCRC 17059 / LMG 24140 / F1).